The following is a 147-amino-acid chain: Hemoglobin subunit beta-2 (147 aa).

Position 2 is an N-acetylvaline (Val-2). In terms of domain architecture, Globin spans 3–147; it reads HLTDAEKSAV…VATALAHKYH (145 aa). At Lys-18 the chain carries N6-succinyllysine. At Tyr-42 the chain carries Phosphotyrosine. Ser-45, Ser-51, and Ser-53 each carry phosphoserine. Residue Lys-60 is modified to N6-succinyllysine. Heme b-binding residues include His-64 and His-93. Arg-105 carries the asymmetric dimethylarginine modification. Thr-124 bears the Phosphothreonine mark.

The protein belongs to the globin family. Heterotetramer of two alpha chains and two beta chains. In terms of tissue distribution, red blood cells.

Involved in oxygen transport from the lung to the various peripheral tissues. The polypeptide is Hemoglobin subunit beta-2 (Hbb-b2) (Mus musculus (Mouse)).